A 333-amino-acid polypeptide reads, in one-letter code: Torsin-1A (333 aa).

Positions 1-20 (MKLGRATLALLLLVPCVVRA) are cleaved as a signal peptide. The segment at 92 to 252 (KPKKPLTLSL…VSVFNNKNSG (161 aa)) is interaction with SNAPIN. 2 N-linked (GlcNAc...) asparagine glycosylation sites follow: Asn-144 and Asn-159. The interval 252–333 (GFWHSSLIDR…FTKLDYYLDD (82 aa)) is interaction with KLC1. The interval 313–333 (KVFSDKGCKTVFTKLDYYLDD) is interaction with SYNE3.

Belongs to the ClpA/ClpB family. Torsin subfamily. Homohexamer. Interacts with TOR1B; the interaction may be specific of neural tissues. Interacts (ATP-bound) with TOR1AIP1 and TOR1AIP2; the interactions induce ATPase activity. Interacts with KLHL14; preferentially when ATP-free. Interacts with KLC1 (via TPR repeats); the interaction associates TOR1A with the kinesin oligomeric complex. Interacts with COPS4; the interaction associates TOR1A with the CSN complex. Interacts with SNAPIN; the interaction is direct and associates SNAPIN with the CSN complex. Interacts with STON2. Interacts (ATP-bound) with SYNE3 (via KASH domain); the interaction is required for SYNE3 nuclear envelope localization. Interacts with VIM; the interaction associates TOR1A with the cytoskeleton. Interacts with PLEC. Interacts (ATP-bound) with SLC6A3; regulates SLC6A3 transport to the plasma membrane. Post-translationally, N-glycosylated. As to expression, expressed in brain (at protein level).

Its subcellular location is the endoplasmic reticulum lumen. It is found in the nucleus inner membrane. It localises to the cell projection. The protein resides in the growth cone. The protein localises to the cytoplasmic vesicle membrane. Its subcellular location is the cytoplasmic vesicle. It is found in the secretory vesicle. It localises to the synaptic vesicle. It catalyses the reaction ATP + H2O = ADP + phosphate + H(+). In terms of biological role, protein with chaperone functions important for the control of protein folding, processing, stability and localization as well as for the reduction of misfolded protein aggregates. Involved in the regulation of synaptic vesicle recycling, controls STON2 protein stability in collaboration with the COP9 signalosome complex (CSN). In the nucleus, may link the cytoskeleton with the nuclear envelope, this mechanism seems to be crucial for the control of nuclear polarity, cell movement and, specifically in neurons, nuclear envelope integrity. Participates in the cellular trafficking and may regulate the subcellular location of multipass membrane proteins such as the dopamine transporter SLC6A3, leading to the modulation of dopamine neurotransmission. In the endoplasmic reticulum, plays a role in the quality control of protein folding by increasing clearance of misfolded proteins such as SGCE variants or holding them in an intermediate state for proper refolding. May have a redundant function with TOR1B in non-neural tissues. The protein is Torsin-1A (Tor1a) of Rattus norvegicus (Rat).